A 561-amino-acid chain; its full sequence is Putative transport protein YbjL (561 aa).

5 helical membrane passes run 8-28 (LLNG…LCLG), 32-52 (LGSI…LLGQ), 66-86 (FMLF…SIFF), 94-114 (MLAL…GKLF), and 158-178 (NLSL…IVGA). RCK C-terminal domains lie at 200-288 (RGLD…SFRN) and 292-373 (VFDR…RIGF). 5 helical membrane passes run 383 to 403 (LLAF…TFQF), 406 to 426 (FSFG…LGFM), 451 to 471 (VFMA…LGAI), 475 to 495 (MLIA…LFGA), and 540 to 560 (AIAN…WPGL).

It belongs to the AAE transporter (TC 2.A.81) family. YbjL subfamily.

The protein localises to the cell membrane. The polypeptide is Putative transport protein YbjL (Shigella flexneri).